Here is a 446-residue protein sequence, read N- to C-terminus: MENISDLWNSALKELEKKVSKPSYETWLKSTTAHNLKKDVLTITAPNEFARDWLESHYSELISETLYDLTGAKLAIRFIIPQSQAEEEIDLPPSKPNAAQDDSNHLPQSMLNPKYTFDTFVIGSGNRFAHAASLAVAEAPAKAYNPLFIYGGVGLGKTHLMHAIGHYVIEHNPNAKVVYLSSEKFTNEFINSIRDNKAVDFRNKYRNVDVLLIDDIQFLAGKEQTQEEFFHTFNALHEESKQIVISSDRPPKEIPTLEDRLRSRFEWGLITDITPPDLETRIAILRKKAKAEGLDIPNEVMLYIANQIDSNIRELEGALIRVVAYSSLINKDINADLAAEALKDIIPNSKPKIISIYDIQKAVGDVYQVKLEDFKAKKRTKSVAFPRQIAMYLSRELTDSSLPKIGEEFGGRDHTTVIHAHEKISKLLKTDTQLQKQVEEINDILK.

Residues 1-92 are domain I, interacts with DnaA modulators; it reads MENISDLWNS…SQAEEEIDLP (92 aa). A domain II region spans residues 93-109; that stretch reads PSKPNAAQDDSNHLPQS. Residues 110–326 are domain III, AAA+ region; the sequence is MLNPKYTFDT…GALIRVVAYS (217 aa). Residues G154, G156, K157, and T158 each coordinate ATP. Residues 327–446 are domain IV, binds dsDNA; sequence SLINKDINAD…QVEEINDILK (120 aa).

It belongs to the DnaA family. As to quaternary structure, oligomerizes as a right-handed, spiral filament on DNA at oriC.

The protein resides in the cytoplasm. Functionally, plays an essential role in the initiation and regulation of chromosomal replication. ATP-DnaA binds to the origin of replication (oriC) to initiate formation of the DNA replication initiation complex once per cell cycle. Binds the DnaA box (a 9 base pair repeat at the origin) and separates the double-stranded (ds)DNA. Forms a right-handed helical filament on oriC DNA; dsDNA binds to the exterior of the filament while single-stranded (ss)DNA is stabiized in the filament's interior. The ATP-DnaA-oriC complex binds and stabilizes one strand of the AT-rich DNA unwinding element (DUE), permitting loading of DNA polymerase. After initiation quickly degrades to an ADP-DnaA complex that is not apt for DNA replication. Binds acidic phospholipids. This is Chromosomal replication initiator protein DnaA from Bacillus cereus (strain 03BB102).